The chain runs to 561 residues: Lysine--tRNA ligase (561 aa).

Residues glutamate 409 and glutamate 416 each contribute to the Mg(2+) site.

This sequence belongs to the class-II aminoacyl-tRNA synthetase family. Homodimer. Mg(2+) serves as cofactor.

It localises to the cytoplasm. The enzyme catalyses tRNA(Lys) + L-lysine + ATP = L-lysyl-tRNA(Lys) + AMP + diphosphate. The polypeptide is Lysine--tRNA ligase (Nostoc sp. (strain PCC 7120 / SAG 25.82 / UTEX 2576)).